The following is a 613-amino-acid chain: Ribosome-associated molecular chaperone SSB1 (613 aa).

N-acetylalanine is present on Ala2. The segment at 2–391 (AEGVFQGAIG…ILTGQSTSDE (390 aa)) is nucleotide binding domain (NBD). ATP is bound at residue 16–18 (TTY). Residue Thr47 is modified to Phosphothreonine. ATP-binding positions include Lys73, 205-207 (GGT), 271-278 (ERAKRTLS), and Gly342. Residues 392–402 (TKDLLLLDVAP) form an inter-domain linker region. A substrate binding domain (SBD) region spans residues 403–613 (LSLGVGMQGD…RVVTKAMSSR (211 aa)). Positions 428 to 430 (KRR) match the Contributes to ribosome binding motif. Phosphothreonine is present on Thr431. Residues 516–612 (SEEIEKMVNQ…KRVVTKAMSS (97 aa)) form a lid domain (SBDalpha) region. Positions 574–582 (IEAALSDAL) match the Nuclear export signal motif. Residues 601–613 (GLKRVVTKAMSSR) form a required for interaction with ribosomes region.

The protein belongs to the heat shock protein 70 family. Ssb-type Hsp70 subfamily. Binds to ribosomes. Binds close to the ribosomal tunnel exit via contacts with both ribosomal proteins RPL35, RPL39 and RPL19, and rRNA. Directly interacts with nascent polypeptides. This interaction is dependent on the ribosome-associated complex (RAC). Interacts with SSE1. Interacts with FES1. Interacts with NAP1.

The protein resides in the cytoplasm. It catalyses the reaction ATP + H2O = ADP + phosphate + H(+). Its function is as follows. Ribosome-bound, Hsp70-type chaperone that assists in the cotranslational folding of newly synthesized proteins in the cytosol. Stimulates folding by interacting with nascent chains, binding to short, largely hydrophobic sequences exposed by unfolded proteins, thereby stabilizing longer, more slowly translated, and aggregation-prone nascent polypeptides and domains that cannot fold stably until fully synthesized. The Hsp70-protein substrate interaction depends on ATP-binding and on allosteric regulation between the NBD and the SBD. The ATP-bound state is characterized by a fast exchange rate of substrate (low affinity state), while in the ADP-bound state exchange is much slower (high affinity state). During the Hsp70 cycle, the chaperone switches between the ATP-bound state (open conformation) and the ADP-bound state (closed conformation) by major conformational rearrangements involving mainly the lid domain. Ssb cooperates with a specific Hsp40/Hsp70 co-chaperone termed the ribosome-associated complex (RAC), which stimulates the ATPase activity of the ribosome-associated pool of Ssbs and switches it to the high affinity substrate binding state. Hsp110 chaperone SSE1 and FES1 act as nucleotide exchange factors that cause substrate release. The sequence is that of Ribosome-associated molecular chaperone SSB1 from Saccharomyces cerevisiae (strain ATCC 204508 / S288c) (Baker's yeast).